Consider the following 634-residue polypeptide: Putative ABC transporter ATP-binding protein MG015 homolog (634 aa).

6 helical membrane-spanning segments follow: residues 54-74 (VLYVMVCAIFGILTGVTNSIL), 111-131 (LTIVCVTVVVAYILIFSFNVA), 189-209 (VGGQTIQSLFILMTTATILFV), 213-233 (VIALISLTVLIALIALSFLFL), 296-316 (VFIYSWFGFISNITYLASISI), and 325-345 (IPSFGVSAINYSFMLSYIAAL). Residues 54 to 364 (VLYVMVCAIF…IFSLWNLIQL (311 aa)) enclose the ABC transmembrane type-1 domain. One can recognise an ABC transporter domain in the interval 397–631 (IRFEKVVFGY…NGFYARLKRS (235 aa)). Residue 430–437 (GPTGAGKS) participates in ATP binding.

It belongs to the ABC transporter superfamily.

It localises to the cell membrane. The chain is Putative ABC transporter ATP-binding protein MG015 homolog from Mycoplasma pneumoniae (strain ATCC 29342 / M129 / Subtype 1) (Mycoplasmoides pneumoniae).